The sequence spans 380 residues: Peptide chain release factor 1-like, mitochondrial (380 aa).

A mitochondrion-targeting transit peptide spans 1-26 (MRSRVLWGAARWLWPRRAVGPARRPL). Positions 63–117 (ELLAVIKLLNEKERELRETEHLLHDENEDLRKLAENEITLCQKEITQLKHQIILL) form a coiled coil. The tract at residues 236–300 (PKDLRIDTKR…LRAKLYSMHL (65 aa)) is GGQ domain. The GGQ signature appears at 250-252 (GGQ). Glutamine 252 is modified (N5-methylglutamine).

It belongs to the prokaryotic/mitochondrial release factor family. In terms of processing, methylation of glutamine in the GGQ triplet by HEMK1 is conserved from bacteria to mammals. As to expression, expressed in skeletal muscle (at protein level).

The protein resides in the mitochondrion. In terms of biological role, mitochondrial peptide chain release factor that directs the termination of translation in response to the peptide chain termination codons UAA and UAG. This Homo sapiens (Human) protein is Peptide chain release factor 1-like, mitochondrial.